The chain runs to 254 residues: 5'-nucleotidase SurE (254 aa).

A divalent metal cation contacts are provided by Asp8, Asp9, Ser38, and Asn91.

Belongs to the SurE nucleotidase family. A divalent metal cation serves as cofactor.

Its subcellular location is the cytoplasm. The catalysed reaction is a ribonucleoside 5'-phosphate + H2O = a ribonucleoside + phosphate. Its function is as follows. Nucleotidase that shows phosphatase activity on nucleoside 5'-monophosphates. In Anaeromyxobacter dehalogenans (strain 2CP-1 / ATCC BAA-258), this protein is 5'-nucleotidase SurE.